We begin with the raw amino-acid sequence, 1102 residues long: Probable leucine-rich repeat receptor-like protein kinase At5g63930 (1102 aa).

Residues 1–26 (MVKEMMKLAVFFISLLLILLISETTG) form the signal peptide. Residues 27-737 (LNLEGQYLLE…GKPGGMRSSK (711 aa)) are Extracellular-facing. N-linked (GlcNAc...) asparagine glycosylation is found at asparagine 54, asparagine 68, asparagine 79, and asparagine 119. 26 LRR repeats span residues 72 to 96 (DPEV…IGGL), 97 to 120 (VHLK…IGNC), 122 to 144 (SLEI…IGKL), 145 to 170 (VSLE…NLLS), 172 to 192 (SQLV…IGNL), 193 to 216 (KRLT…IGGC), 217 to 241 (ESLV…GMLK), 243 to 264 (LSQV…ISNC), 265 to 288 (TSLE…LGDL), 289 to 312 (QSLE…IGNL), 314 to 336 (YAIE…LGNI), 337 to 360 (EGLE…LSTL), 361 to 383 (KNLS…GFQY), 385 to 408 (RGLF…LGWY), 409 to 432 (SDLW…LCLH), 433 to 456 (SNMI…ITTC), 458 to 480 (TLVQ…LCKQ), 481 to 504 (VNVT…VGNC), 505 to 528 (SALQ…IGML), 529 to 552 (SQLG…IFNC), 554 to 576 (MLQR…VGSL), 577 to 602 (YQLE…NLSR), 604 to 624 (TELQ…LGSL), 625 to 649 (TGLQ…LSNL), 651 to 672 (MLEF…SFAN), and 674 to 700 (SSLL…SMSS). Asparagine 180 carries an N-linked (GlcNAc...) asparagine glycan. An N-linked (GlcNAc...) asparagine glycan is attached at asparagine 263. Asparagine 302 and asparagine 311 each carry an N-linked (GlcNAc...) asparagine glycan. Asparagine 362 carries N-linked (GlcNAc...) asparagine glycosylation. Residue asparagine 444 is glycosylated (N-linked (GlcNAc...) asparagine). N-linked (GlcNAc...) asparagine glycosylation is found at asparagine 482 and asparagine 503. 10 N-linked (GlcNAc...) asparagine glycosylation sites follow: asparagine 535, asparagine 564, asparagine 588, asparagine 599, asparagine 614, asparagine 632, asparagine 661, asparagine 672, asparagine 680, and asparagine 695. Residues 738–758 (IIAITAAVIGGVSLMLIALIV) traverse the membrane as a helical segment. Residues 759 to 1102 (YLMRRPVRTV…TEELTQTTTP (344 aa)) are Cytoplasmic-facing. A phosphothreonine mark is found at threonine 793 and threonine 801. A Protein kinase domain is found at 804–1091 (FDESFVVGRG…ERSEGEQEHL (288 aa)). Residues 810-818 (VGRGACGTV) and lysine 832 each bind ATP. Tyrosine 882 and tyrosine 919 each carry phosphotyrosine. The active-site Proton acceptor is aspartate 932. At serine 966 the chain carries Phosphoserine. Tyrosine 974 and tyrosine 981 each carry phosphotyrosine. Threonine 982 carries the phosphothreonine modification.

Belongs to the protein kinase superfamily. Ser/Thr protein kinase family.

The protein localises to the cell membrane. It carries out the reaction L-seryl-[protein] + ATP = O-phospho-L-seryl-[protein] + ADP + H(+). The catalysed reaction is L-threonyl-[protein] + ATP = O-phospho-L-threonyl-[protein] + ADP + H(+). The sequence is that of Probable leucine-rich repeat receptor-like protein kinase At5g63930 from Arabidopsis thaliana (Mouse-ear cress).